A 173-amino-acid polypeptide reads, in one-letter code: T-cell surface glycoprotein CD3 gamma chain (173 aa).

The N-terminal stretch at 1–22 is a signal peptide; the sequence is MEQGKHLAGLILAVFLLQGTMA. The Extracellular segment spans residues 23–111; that stretch reads HVKEVKVDDN…NCIELNPSTV (89 aa). One can recognise an Ig-like domain in the interval 24–94; it reads VKEVKVDDNR…GSNNQSKSLQ (71 aa). A disulfide bond links C42 and C83. Residues N45 and N88 are each glycosylated (N-linked (GlcNAc...) asparagine). The helical transmembrane segment at 112–132 threads the bilayer; it reads AGFIFTEIVSIFLLAVGVYFI. Residues 133 to 173 are Cytoplasmic-facing; sequence AGQEGVRQSRASDKQTLLNNDQLYQPLKEREDDQYSHLRKN. A Phosphoserine modification is found at S141. The residue at position 144 (S144) is a Phosphoserine; by PKC. Positions 145-173 constitute an ITAM domain; it reads DKQTLLNNDQLYQPLKEREDDQYSHLRKN. The Di-leucine motif motif lies at 149–150; it reads LL.

In terms of assembly, the TCR-CD3 complex is composed of a CD3D/CD3E and a CD3G/CD3E heterodimers that preferentially associate with TCRalpha and TCRbeta, respectively, to form TCRalpha/CD3E/CD3G and TCRbeta/CD3G/CD3E trimers. In turn, the hexamer interacts with CD3Z homodimer to form the TCR-CD3 complex. Alternatively, TCRalpha and TCRbeta can be replaced by TCRgamma and TCRdelta. Phosphorylated on Tyr residues after T-cell receptor triggering by LCK in association with CD4/CD8. Phosphorylated also by PKC; leading to the TCR complex down-regulation. In terms of processing, phosphorylated on Tyr residues after T-cell receptor triggering by LCK in association with CD4/CD8.

Its subcellular location is the cell membrane. In terms of biological role, part of the TCR-CD3 complex present on T-lymphocyte cell surface that plays an essential role in adaptive immune response. When antigen presenting cells (APCs) activate T-cell receptor (TCR), TCR-mediated signals are transmitted across the cell membrane by the CD3 chains CD3D, CD3E, CD3G and CD3Z. All CD3 chains contain immunoreceptor tyrosine-based activation motifs (ITAMs) in their cytoplasmic domain. Upon TCR engagement, these motifs become phosphorylated by Src family protein tyrosine kinases LCK and FYN, resulting in the activation of downstream signaling pathways. In addition to this role of signal transduction in T-cell activation, CD3G plays an essential role in the dynamic regulation of TCR expression at the cell surface. Indeed, constitutive TCR cycling is dependent on the di-leucine-based (diL) receptor-sorting motif present in CD3G. This Bos taurus (Bovine) protein is T-cell surface glycoprotein CD3 gamma chain (CD3G).